The sequence spans 289 residues: Release factor glutamine methyltransferase (289 aa).

S-adenosyl-L-methionine contacts are provided by residues 130 to 134 (GTGTG), D153, W182, and N196. 196–199 (NPPY) provides a ligand contact to substrate.

Belongs to the protein N5-glutamine methyltransferase family. PrmC subfamily.

The enzyme catalyses L-glutaminyl-[peptide chain release factor] + S-adenosyl-L-methionine = N(5)-methyl-L-glutaminyl-[peptide chain release factor] + S-adenosyl-L-homocysteine + H(+). In terms of biological role, methylates the class 1 translation termination release factors RF1/PrfA and RF2/PrfB on the glutamine residue of the universally conserved GGQ motif. This chain is Release factor glutamine methyltransferase, found in Agrobacterium fabrum (strain C58 / ATCC 33970) (Agrobacterium tumefaciens (strain C58)).